The chain runs to 310 residues: Aspartate carbamoyltransferase catalytic subunit 3 (310 aa).

Positions 55 and 56 each coordinate carbamoyl phosphate. Lys-85 is a binding site for L-aspartate. Carbamoyl phosphate contacts are provided by Arg-106, His-134, and Gln-137. Residues Arg-167 and Arg-228 each coordinate L-aspartate. Carbamoyl phosphate contacts are provided by Leu-266 and Pro-267.

The protein belongs to the aspartate/ornithine carbamoyltransferase superfamily. ATCase family. As to quaternary structure, heterododecamer (2C3:3R2) of six catalytic PyrB chains organized as two trimers (C3), and six regulatory PyrI chains organized as three dimers (R2).

The catalysed reaction is carbamoyl phosphate + L-aspartate = N-carbamoyl-L-aspartate + phosphate + H(+). Its pathway is pyrimidine metabolism; UMP biosynthesis via de novo pathway; (S)-dihydroorotate from bicarbonate: step 2/3. In terms of biological role, catalyzes the condensation of carbamoyl phosphate and aspartate to form carbamoyl aspartate and inorganic phosphate, the committed step in the de novo pyrimidine nucleotide biosynthesis pathway. In Shewanella halifaxensis (strain HAW-EB4), this protein is Aspartate carbamoyltransferase catalytic subunit 3.